A 378-amino-acid chain; its full sequence is Mannitol-1-phosphate 5-dehydrogenase (378 aa).

4–15 (SVHFGAGNIGRG) contributes to the NAD(+) binding site.

It belongs to the mannitol dehydrogenase family.

The enzyme catalyses D-mannitol 1-phosphate + NAD(+) = beta-D-fructose 6-phosphate + NADH + H(+). The polypeptide is Mannitol-1-phosphate 5-dehydrogenase (Streptococcus pneumoniae (strain CGSP14)).